Reading from the N-terminus, the 451-residue chain is UPF0210 protein CA_C0479 (451 aa).

This sequence belongs to the UPF0210 family. In terms of assembly, homodimer.

The chain is UPF0210 protein CA_C0479 from Clostridium acetobutylicum (strain ATCC 824 / DSM 792 / JCM 1419 / IAM 19013 / LMG 5710 / NBRC 13948 / NRRL B-527 / VKM B-1787 / 2291 / W).